Reading from the N-terminus, the 141-residue chain is MAKKVVAIIKLALEAGKATPAPPVGPALGQRGVNIVMFCKDYNARTADKAGLIIPVEITVYEDKSYTFVLKTPPASVLLAKAAGVQKGSGNPKKTQVGSVTKKQVEEIAQTKLPDLNTRRLESAIRIIEGTAKNMGIGVTD.

This sequence belongs to the universal ribosomal protein uL11 family. Part of the ribosomal stalk of the 50S ribosomal subunit. Interacts with L10 and the large rRNA to form the base of the stalk. L10 forms an elongated spine to which L12 dimers bind in a sequential fashion forming a multimeric L10(L12)X complex.

Its subcellular location is the plastid. It is found in the chloroplast. Forms part of the ribosomal stalk which helps the ribosome interact with GTP-bound translation factors. This Guillardia theta (Cryptophyte) protein is Large ribosomal subunit protein uL11c.